A 263-amino-acid polypeptide reads, in one-letter code: Glucosamine-6-phosphate deaminase (263 aa).

The Proton acceptor; for enolization step role is filled by Asp67. Asn136 functions as the For ring-opening step in the catalytic mechanism. His138 serves as the catalytic Proton acceptor; for ring-opening step. Glu143 functions as the For ring-opening step in the catalytic mechanism.

The protein belongs to the glucosamine/galactosamine-6-phosphate isomerase family. NagB subfamily. Homohexamer.

The enzyme catalyses alpha-D-glucosamine 6-phosphate + H2O = beta-D-fructose 6-phosphate + NH4(+). The protein operates within amino-sugar metabolism; N-acetylneuraminate degradation; D-fructose 6-phosphate from N-acetylneuraminate: step 5/5. In terms of biological role, catalyzes the reversible isomerization-deamination of glucosamine 6-phosphate (GlcN6P) to form fructose 6-phosphate (Fru6P) and ammonium ion. This Shewanella halifaxensis (strain HAW-EB4) protein is Glucosamine-6-phosphate deaminase.